The primary structure comprises 309 residues: MSIRIIPQDELEKSEKRTADMIPPLLFPRLKNLYNRRAERLRELAENNPLGDYLRFAALIAHAQEVVLYDHPLEMDLTARIKEANAQGKPPLDIHVLPRDKHWQKLLHSLIAELKPEMSGPALAVIENLEKASEQELEQMASALFESNFASVSSDKAPFIWAALSLYWAQMASLIPGKARAEYGEQRQYCPVCGSMPVSSMVQIGTTQGLRYLHCNLCETEWHVVRVKCSNCEQSRDLHYWSLDNEQASIKAESCGDCGTYLKILYQEKDPKVEAVADDLASLVLDARMEQEGFARSSINPFLFPGEGE.

It belongs to the FdhE family.

The protein localises to the cytoplasm. Its function is as follows. Necessary for formate dehydrogenase activity. The chain is Protein FdhE homolog from Citrobacter koseri (strain ATCC BAA-895 / CDC 4225-83 / SGSC4696).